Consider the following 993-residue polypeptide: UPF0182 protein MAV_4137 (993 aa).

Helical transmembrane passes span 18-38 (ILILIALGVIALLLAGPRLID), 63-83 (FVVFLIAGLLVGGIVFAGLAV), 113-133 (LVSIGVPVAIGLLAGIIAQSY), 175-195 (FVAVFLAFVANLLAHYIFGGI), 210-230 (IQLVTLVGLLVLLKAVAYWLD), 254-274 (AVLPAKLILMAIALICAAAVF), and 287-307 (IGLVLLLLSSLIVGAGWPLIV). Residues 903 to 941 (NIQPTEGGAPAASPPANAPAPAVTPGSAPPVAAPPVPDG) are disordered. Pro residues predominate over residues 929–939 (SAPPVAAPPVP).

Belongs to the UPF0182 family.

The protein localises to the cell membrane. The chain is UPF0182 protein MAV_4137 from Mycobacterium avium (strain 104).